A 942-amino-acid chain; its full sequence is Nuclear receptor coactivator 7 (942 aa).

An N-acetylmethionine modification is found at Met-1. A compositionally biased stretch (basic and acidic residues) spans 1 to 12; the sequence is MDTKEEKKERKQ. Positions 1 to 46 are disordered; it reads MDTKEEKKERKQSYFARLKKKKQAKQNAETASAVATRTHTGKEDNN. Positions 4-29 form a coiled coil; the sequence is KEEKKERKQSYFARLKKKKQAKQNAE. Residues 25–38 show a composition bias toward polar residues; the sequence is KQNAETASAVATRT. A Phosphoserine modification is found at Ser-89. Residues 114–157 form the LysM domain; it reads MEYTAGNQDTLNSIALKFNITPNKLVELNKLFTHTIVPGQVLFV. Residue Thr-134 is modified to Phosphothreonine. A disordered region spans residues 161-188; the sequence is NSPSSTLRLSSSSPGATVSPSSSDAEYD. Over residues 162–183 the composition is skewed to low complexity; it reads SPSSTLRLSSSSPGATVSPSSS. 5 positions are modified to phosphoserine: Ser-179, Ser-183, Ser-208, Ser-209, and Ser-211. Residues 324-416 are disordered; that stretch reads KFKSINKEKR…ENFLGEDDDF (93 aa). The segment covering 356–368 has biased composition (polar residues); the sequence is GHTPTKPSGSSVS. Basic and acidic residues predominate over residues 369-381; the sequence is EKLKKLDSSRETS. Residues Ser-441, Ser-500, and Ser-502 each carry the phosphoserine modification. Residues 781-942 enclose the TLDc domain; the sequence is ALLENMHIEQ…VQDLEVWAFD (162 aa).

This sequence belongs to the OXR1 family. In terms of assembly, interacts with ESR1, ESR2A, ESR2B, THRB, PPARG and RARA in a ligand-inducible manner. Interacts with the heterodimer AHR-ARNT. Highly expressed in brain. Weakly expressed in mammary gland, ovary, uterus, prostate, stomach, bladder, spinal cord and pancreas. Expressed in cancer cell line.

It is found in the nucleus. In terms of biological role, enhances the transcriptional activities of several nuclear receptors. Involved in the coactivation of different nuclear receptors, such as ESR1, THRB, PPARG and RARA. The protein is Nuclear receptor coactivator 7 (NCOA7) of Homo sapiens (Human).